The primary structure comprises 77 residues: RNA-binding protein Hfq (77 aa).

In terms of domain architecture, Sm spans 10 to 70; sequence DAFLNHVRKA…ISTIMPGQPI (61 aa).

It belongs to the Hfq family. In terms of assembly, homohexamer.

Its function is as follows. RNA chaperone that binds small regulatory RNA (sRNAs) and mRNAs to facilitate mRNA translational regulation in response to envelope stress, environmental stress and changes in metabolite concentrations. Also binds with high specificity to tRNAs. The polypeptide is RNA-binding protein Hfq (Cereibacter sphaeroides (strain ATCC 17029 / ATH 2.4.9) (Rhodobacter sphaeroides)).